The primary structure comprises 152 residues: Transcriptional repressor NrdR (152 aa).

The segment at 3–34 is a zinc-finger region; it reads CPFCNAADSKVIDSRLAAEGCQIRRRRECVSC. Residues 49–139 form the ATP-cone domain; that stretch reads PRVIKSNGKN…VYQDFQDVEA (91 aa).

It belongs to the NrdR family. Zn(2+) is required as a cofactor.

Negatively regulates transcription of bacterial ribonucleotide reductase nrd genes and operons by binding to NrdR-boxes. The protein is Transcriptional repressor NrdR of Acinetobacter baumannii (strain AB0057).